The chain runs to 633 residues: Extracellular metalloproteinase 3 (633 aa).

An N-terminal signal peptide occupies residues 1–18 (MHGLLLAGLLALPMNVLA). A propeptide spanning residues 19–246 (HPAEQQTSSV…VHNVVDYVAS (228 aa)) is cleaved from the precursor. N-linked (GlcNAc...) asparagine glycosylation is present at Asn-410. His-429 provides a ligand contact to Zn(2+). The active site involves Glu-430. His-433 is a Zn(2+) binding site. An N-linked (GlcNAc...) asparagine glycan is attached at Asn-480.

It belongs to the peptidase M36 family. It depends on Zn(2+) as a cofactor.

The protein localises to the secreted. In terms of biological role, secreted metalloproteinase probably acting as a virulence factor. In Arthroderma otae (Microsporum canis), this protein is Extracellular metalloproteinase 3 (MEP3).